The chain runs to 725 residues: Fatty acid oxidation complex subunit alpha (725 aa).

Residues 1-189 (MIYQGENLSV…ALGMIDGVVS (189 aa)) are enoyl-CoA hydratase/isomerase. Asp296 is a substrate binding site. The segment at 311–725 (EPVTSAAVLG…APQSLSAPSA (415 aa)) is 3-hydroxyacyl-CoA dehydrogenase. NAD(+) contacts are provided by residues Met324, Asp343, 400-402 (VVE), Lys407, and Ser429. His450 acts as the For 3-hydroxyacyl-CoA dehydrogenase activity in catalysis. Position 453 (Asn453) interacts with NAD(+). Asn500 and Tyr660 together coordinate substrate.

In the N-terminal section; belongs to the enoyl-CoA hydratase/isomerase family. This sequence in the C-terminal section; belongs to the 3-hydroxyacyl-CoA dehydrogenase family. In terms of assembly, heterotetramer of two alpha chains (FadB) and two beta chains (FadA).

The catalysed reaction is a (3S)-3-hydroxyacyl-CoA + NAD(+) = a 3-oxoacyl-CoA + NADH + H(+). The enzyme catalyses a (3S)-3-hydroxyacyl-CoA = a (2E)-enoyl-CoA + H2O. It catalyses the reaction a 4-saturated-(3S)-3-hydroxyacyl-CoA = a (3E)-enoyl-CoA + H2O. It carries out the reaction (3S)-3-hydroxybutanoyl-CoA = (3R)-3-hydroxybutanoyl-CoA. The catalysed reaction is a (3Z)-enoyl-CoA = a 4-saturated (2E)-enoyl-CoA. The enzyme catalyses a (3E)-enoyl-CoA = a 4-saturated (2E)-enoyl-CoA. The protein operates within lipid metabolism; fatty acid beta-oxidation. In terms of biological role, involved in the aerobic and anaerobic degradation of long-chain fatty acids via beta-oxidation cycle. Catalyzes the formation of 3-oxoacyl-CoA from enoyl-CoA via L-3-hydroxyacyl-CoA. It can also use D-3-hydroxyacyl-CoA and cis-3-enoyl-CoA as substrate. The sequence is that of Fatty acid oxidation complex subunit alpha from Aliivibrio fischeri (strain MJ11) (Vibrio fischeri).